The sequence spans 382 residues: Probable dual-specificity RNA methyltransferase RlmN (382 aa).

Catalysis depends on E118, which acts as the Proton acceptor. In terms of domain architecture, Radical SAM core spans 124-370; sequence YDKRVTMCIS…TTVRDTRGSD (247 aa). The cysteines at positions 131 and 375 are disulfide-linked. Residues C138, C142, and C145 each contribute to the [4Fe-4S] cluster site. Residues 196–197, S230, 253–255, and N332 each bind S-adenosyl-L-methionine; these read GE and SLH. The active-site S-methylcysteine intermediate is the C375.

It belongs to the radical SAM superfamily. RlmN family. [4Fe-4S] cluster serves as cofactor.

It localises to the cytoplasm. The catalysed reaction is adenosine(2503) in 23S rRNA + 2 reduced [2Fe-2S]-[ferredoxin] + 2 S-adenosyl-L-methionine = 2-methyladenosine(2503) in 23S rRNA + 5'-deoxyadenosine + L-methionine + 2 oxidized [2Fe-2S]-[ferredoxin] + S-adenosyl-L-homocysteine. The enzyme catalyses adenosine(37) in tRNA + 2 reduced [2Fe-2S]-[ferredoxin] + 2 S-adenosyl-L-methionine = 2-methyladenosine(37) in tRNA + 5'-deoxyadenosine + L-methionine + 2 oxidized [2Fe-2S]-[ferredoxin] + S-adenosyl-L-homocysteine. Functionally, specifically methylates position 2 of adenine 2503 in 23S rRNA and position 2 of adenine 37 in tRNAs. The chain is Probable dual-specificity RNA methyltransferase RlmN from Kocuria rhizophila (strain ATCC 9341 / DSM 348 / NBRC 103217 / DC2201).